We begin with the raw amino-acid sequence, 445 residues long: POU domain, class 3, transcription factor 2 (445 aa).

Disordered stretches follow at residues 64–173 (ALSH…WRSA) and 203–269 (LGAG…TPTS). Residues 67–90 (HGGGGGGGGGGGGGGGGGGGGGDG) are compositionally biased toward gly residues. 2 stretches are compositionally biased toward low complexity: residues 125–151 (QQQHQQQQQQQQQQQQQQQQQQQQQQQ) and 163–173 (HHPGPGAWRSA). Over residues 217 to 226 (LRDAHDEPHH) the composition is skewed to basic and acidic residues. Residues 227-237 (ADHHPHPHSHP) show a composition bias toward basic residues. The segment covering 239–253 (QQPPPPPPPQGPPGH) has biased composition (pro residues). The region spanning 264–338 (EDTPTSDDLE…LLNKWLEEAD (75 aa)) is the POU-specific domain. A Phosphoserine modification is found at serine 343. Residues 356–415 (KRKKRTSIEVSVKGALESHFLKCPKPSAQEITSLADSLQLEKEVVRVWFCNRRQKEKRMT) constitute a DNA-binding region (homeobox). A disordered region spans residues 411 to 445 (EKRMTPPGGTLPGAEDVYGGSRDTPPHHGVQTPVQ).

This sequence belongs to the POU transcription factor family. Class-3 subfamily. In terms of assembly, interacts with PQBP1. Interaction with ISL1. Expressed specifically in the neuroectodermal cell lineage.

It localises to the nucleus. Its function is as follows. Transcription factor that plays a key role in neuronal differentiation. Binds preferentially to the recognition sequence which consists of two distinct half-sites, ('GCAT') and ('TAAT'), separated by a non-conserved spacer region of 0, 2, or 3 nucleotides. Acts as a transcriptional activator when binding cooperatively with SOX4, SOX11, or SOX12 to gene promoters. The combination of three transcription factors, ASCL1, POU3F2/BRN2 and MYT1L, is sufficient to reprogram fibroblasts and other somatic cells into induced neuronal (iN) cells in vitro. Acts downstream of ASCL1, accessing chromatin that has been opened by ASCL1, and promotes transcription of neuronal genes. In Mus musculus (Mouse), this protein is POU domain, class 3, transcription factor 2 (Pou3f2).